The chain runs to 600 residues: Na(+)/dicarboxylate cotransporter 3 (600 aa).

Topologically, residues 1–16 (MAALAALAKKVWSARR) are cytoplasmic. The chain crosses the membrane as a helical span at residues 17–37 (LLVLLLVPLALLPILFALPPK). At 38-55 (EGRCLYVILLMAVYWCTE) the chain is on the extracellular side. A helical transmembrane segment spans residues 56–76 (ALPLSVTALLPIILFPFMGIL). Over 77–82 (PSSKVC) the chain is Cytoplasmic. The helical transmembrane segment at 83–103 (PQYFLDTNFLFLSGLIMASAI) threads the bilayer. Residues 104–137 (EERNLHRRIALKVLMLVGVQPARLILGMMVTTSF) are Extracellular-facing. The chain crosses the membrane as a helical span at residues 138-158 (LSMWLSNTASTAMMLPIASAI). Residues 159 to 229 (LKSLFGQRDT…KEEEHRRNIW (71 aa)) lie on the Cytoplasmic side of the membrane. The chain crosses the membrane as a helical span at residues 230–250 (KGFLISIPYSASIGGTATLTG). Over 251-278 (TAPNLILLGQLKSFFPQCDVVNFGSWFI) the chain is Extracellular. Residues 279–299 (FAFPLMLLFLLVGWLWISFLY) form a helical membrane-spanning segment. The Cytoplasmic segment spans residues 300–336 (GGMSWRGWRKKNSKLQDVAEDKAKAVIQEEFQNLGPI). A helical membrane pass occupies residues 337-357 (KFAEQAVFILFCLFAILLFSR). Over 358-372 (DPKFIPGWASLFAPG) the chain is Extracellular. Residues 373-393 (FVSDAVTGVAIVTILFFFPSQ) traverse the membrane as a helical segment. The Cytoplasmic segment spans residues 394 to 422 (KPSLKWWFDFKAPNSETEPLLSWKKAQET). Residues 423–443 (VPWNIILLLGGGFAMAKGCEE) constitute an intramembrane region (helical). Over 444–461 (SGLSAWIGGQLHPLEHVP) the chain is Cytoplasmic. The chain crosses the membrane as a helical span at residues 462-482 (PLLAVLLITVVIAFFTEFASN). The Extracellular portion of the chain corresponds to 483–505 (TATIIIFLPVLAELAIRLHVHPL). A helical transmembrane segment spans residues 506-526 (YLMIPGTVSCSYAFMLPVSTP). Residues 527-546 (PNSIAFSTGHLLVKDMVRTG) are Cytoplasmic-facing. A helical transmembrane segment spans residues 547-567 (LLMNLMGVLLLSLAMNTWAQA). The Extracellular segment spans residues 568–600 (IFQLGTFPDWANTHAANVTALPPALTNNTVQTL). N-linked (GlcNAc...) asparagine glycosylation is found at asparagine 584 and asparagine 594.

It belongs to the SLC13A/DASS transporter (TC 2.A.47) family. NADC subfamily. As to expression, highly expressed in proximal parts of straight tubules in the kidney. Detected in placenta, in brain, and in liver. Strongly expressed within the meningeal layers of supporting tissue that surround the brain and relatively weakly expressed throughout the cerebral cortex, hippocampus, and cerebellum.

It localises to the cell membrane. It carries out the reaction succinate(out) + 3 Na(+)(out) = succinate(in) + 3 Na(+)(in). The enzyme catalyses 2-oxoglutarate(out) + 3 Na(+)(out) = 2-oxoglutarate(in) + 3 Na(+)(in). It catalyses the reaction N-acetyl-L-aspartate(out) + 3 Na(+)(out) = N-acetyl-L-aspartate(in) + 3 Na(+)(in). The catalysed reaction is glutarate(out) + 3 Na(+)(out) = glutarate(in) + 3 Na(+)(in). It carries out the reaction fumarate(out) + 3 Na(+)(out) = fumarate(in) + 3 Na(+)(in). The enzyme catalyses malate(out) + 3 Na(+)(out) = malate(in) + 3 Na(+)(in). It catalyses the reaction 2,2-dimethylsuccinate(out) + 3 Na(+)(out) = 2,2-dimethylsuccinate(in) + 3 Na(+)(in). The catalysed reaction is 2,3-dimethylsuccinate(out) + 3 Na(+)(out) = 2,3-dimethylsuccinate(in) + 3 Na(+)(in). It carries out the reaction itaconate(out) + 3 Na(+)(out) = itaconate(in) + 3 Na(+)(in). Its activity is regulated as follows. Li(+) decreases succinate transport in the presence of Na(+). In terms of biological role, high-affinity sodium-dicarboxylate cotransporter that accepts a range of substrates with 4-6 carbon atoms, such as the citric acid cycle intermediates succinate and alpha-ketoglutarate (2-oxoglutarate), as well as other compounds including N-acetyl-L-aspartate. Transports the dicarboxylate into the cell with a probable stoichiometry of 3 Na(+) for 1 divalent dicarboxylate, rendering the process electrogenic. Can transport citrate in a Na(+)-dependent manner, recognizing the divalent form of citrate rather than the trivalent form which is normally found in blood. Imports itaconate in hepatocytes leading to activation of TFEB-dependent lysosomal biogenesis involved in antibacterial innate immune response. The chain is Na(+)/dicarboxylate cotransporter 3 (Slc13a3) from Rattus norvegicus (Rat).